Reading from the N-terminus, the 104-residue chain is MNREEATLLGFEIVAYAGDARSKLLEALNAAQAGEYDRAEELVAAADDCIVDAHKAQTSLLAKEAQGDDIELSVTLMHGQDHLMTTILLKDLMKHLIELYKRGS.

Residues 4–102 enclose the PTS EIIA type-3 domain; that stretch reads EEATLLGFEI…MKHLIELYKR (99 aa). H78 acts as the Tele-phosphohistidine intermediate in catalysis. The residue at position 78 (H78) is a Phosphohistidine; by HPr. D81 contacts Mg(2+).

In terms of assembly, homotrimer. It depends on Mg(2+) as a cofactor.

It localises to the cytoplasm. Functionally, the phosphoenolpyruvate-dependent sugar phosphotransferase system (sugar PTS), a major carbohydrate active transport system, catalyzes the phosphorylation of incoming sugar substrates concomitantly with their translocation across the cell membrane. The enzyme II LacEF PTS system is involved in lactose transport. The chain is PTS system lactose-specific EIIA component from Streptococcus mutans serotype c (strain ATCC 700610 / UA159).